The sequence spans 617 residues: ATP-dependent rRNA helicase SPB4 (617 aa).

A Q motif motif is present at residues 7-35; it reads WADLDYELQPWIKKAINVSGFDSMTPVQA. One can recognise a Helicase ATP-binding domain in the interval 38–224; the sequence is IPMFAKNKDV…KTGLRNPVKI (187 aa). ATP is bound at residue 51–58; sequence SVTGSGKT. The short motif at 172-175 is the DEAD box element; that stretch reads DEAD. The 155-residue stretch at 252–406 folds into the Helicase C-terminal domain; that stretch reads NLIHIMNNIR…ETDINKNKIS (155 aa).

Belongs to the DEAD box helicase family. DDX55/SPB4 subfamily. In terms of assembly, component of pre-60S ribosomal complexes.

It is found in the nucleus. It localises to the nucleolus. It carries out the reaction ATP + H2O = ADP + phosphate + H(+). ATP-binding RNA helicase involved in the biogenesis of 60S ribosomal subunits. Binds 90S pre-ribosomal particles and dissociates from pre-60S ribosomal particles after processing of 27SB pre-rRNA. Required for the normal formation of 18S rRNA through the processing of pre-rRNAs at sites A0, A1 and A2, and the normal formation of 25S and 5.8S rRNAs through the processing of pre-rRNAs at sites C1 and C2. This Candida glabrata (strain ATCC 2001 / BCRC 20586 / JCM 3761 / NBRC 0622 / NRRL Y-65 / CBS 138) (Yeast) protein is ATP-dependent rRNA helicase SPB4.